The following is a 348-amino-acid chain: MASRKEGSGAAGGGFGASKGKGKAATTGDSAVKQVQIDGLVVLKIIKHYQEEGQGNEVVQGVLLGLVVDDRLEITNCFPFPQHTEDDADFDEVQYQMEMMRSLRHVNIDHLHVGWYQSTYYGSFVTRALLDSQFSYQHAIEESVVLIYDPIKTAQGSLSLKAYRLTPKLMEVCKEKDFSPEALKKANIAYENMFEEVPIVIKNSYLINVMLWELEKKSAVADRHELLSLASSNHLGKSLQLLMDRVDEMSQDIVKYNTYLRNVSKQQQQKHQYQQRRQQENLQRQSRGEAPLPEEDINKLFKPPQPPARMESLLIAGQINTYCQNIKEFNAQNLGKLFMAQALQDYNN.

A disordered region spans residues 1-25 (MASRKEGSGAAGGGFGASKGKGKAA). Residues 9–19 (GAAGGGFGASK) show a composition bias toward gly residues. The MPN domain maps to 35-169 (VQIDGLVVLK…LKAYRLTPKL (135 aa)). The segment covering 266–285 (QQQQKHQYQQRRQQENLQRQ) has biased composition (low complexity). The disordered stretch occupies residues 266–304 (QQQQKHQYQQRRQQENLQRQSRGEAPLPEEDINKLFKPP).

Belongs to the eIF-3 subunit H family. In terms of assembly, component of the eukaryotic translation initiation factor 3 (eIF-3) complex, which is composed of 13 subunits: EIF3A, EIF3B, EIF3C, EIF3D, EIF3E, EIF3F, EIF3G, EIF3H, EIF3I, EIF3J, EIF3K, EIF3L and EIF3M.

Its subcellular location is the cytoplasm. Component of the eukaryotic translation initiation factor 3 (eIF-3) complex, which is involved in protein synthesis of a specialized repertoire of mRNAs and, together with other initiation factors, stimulates binding of mRNA and methionyl-tRNAi to the 40S ribosome. The eIF-3 complex specifically targets and initiates translation of a subset of mRNAs involved in cell proliferation. The sequence is that of Eukaryotic translation initiation factor 3 subunit H from Gallus gallus (Chicken).